The chain runs to 254 residues: Probable WRKY transcription factor 67 (254 aa).

The WRKY DNA-binding region spans 102–170; sequence SRTMCPNDGF…YLGKHVCKAF (69 aa).

Belongs to the WRKY group III family.

It localises to the nucleus. Functionally, transcription factor. Interacts specifically with the W box (5'-(T)TGAC[CT]-3'), a frequently occurring elicitor-responsive cis-acting element. This is Probable WRKY transcription factor 67 (WRKY67) from Arabidopsis thaliana (Mouse-ear cress).